The chain runs to 148 residues: MEIDDLDRKILSLLIEDSRLSYREIAKKLNVAVGTIYNRIKKLEDMGVIQGFTVKLNYEKLGYELTAIIGIKAQGKKIREIERIIARDKHVTCVYDVTGEYDIIVIAKFRSREDMNRFVKSVLSVDGVEKTNTHVALEIVKEDFRLEP.

The region spanning 3–64 (IDDLDRKILS…KLNYEKLGYE (62 aa)) is the HTH asnC-type domain. The H-T-H motif DNA-binding region spans 22–41 (YREIAKKLNVAVGTIYNRIK).

This is an uncharacterized protein from Pyrococcus furiosus (strain ATCC 43587 / DSM 3638 / JCM 8422 / Vc1).